The sequence spans 383 residues: MAKRDYYDVLGVSKGASPDEIKKGFRKKAKELHPDRNSDNPNAEAQFKEANEAYDILKDPDKKAAYDRYGHAAFENGSGGPRGPGGFGGQGQGDFASAFSDVFEDLFGDFMGGQRGGGRQRAARGSDLRYNLRITLEQAFMGMQKTISVPGTVSCSACEGTGAEGGAEPVVCPTCSGMGKVRAQQGFFTIEKTCPTCSGMGQIIKNPCQACRGAGREEKTRALSVNIPAGVETGTRIRLAGEGDAGVRGGPSGDLYIFIEVEEHRIFQREGLDLYCRVPVSMTSAALGGDVEVPTIEGGRSRVKIPSGSQSGRQMRLRGKGMPALRGAGTGDMFIELAVETPVNLTMRQRELLREFEAESQDNQPETSKFFKTVKSFWDGMKS.

Residues 5–70 (DYYDVLGVSK…DKKAAYDRYG (66 aa)) form the J domain. Residues 142-220 (GMQKTISVPG…CRGAGREEKT (79 aa)) form a CR-type zinc finger. Residues C155, C158, C172, C175, C194, C197, C208, and C211 each contribute to the Zn(2+) site. CXXCXGXG motif repeat units lie at residues 155–162 (CSACEGTG), 172–179 (CPTCSGMG), 194–201 (CPTCSGMG), and 208–215 (CQACRGAG).

The protein belongs to the DnaJ family. As to quaternary structure, homodimer. Zn(2+) is required as a cofactor.

It is found in the cytoplasm. Functionally, participates actively in the response to hyperosmotic and heat shock by preventing the aggregation of stress-denatured proteins and by disaggregating proteins, also in an autonomous, DnaK-independent fashion. Unfolded proteins bind initially to DnaJ; upon interaction with the DnaJ-bound protein, DnaK hydrolyzes its bound ATP, resulting in the formation of a stable complex. GrpE releases ADP from DnaK; ATP binding to DnaK triggers the release of the substrate protein, thus completing the reaction cycle. Several rounds of ATP-dependent interactions between DnaJ, DnaK and GrpE are required for fully efficient folding. Also involved, together with DnaK and GrpE, in the DNA replication of plasmids through activation of initiation proteins. In Dinoroseobacter shibae (strain DSM 16493 / NCIMB 14021 / DFL 12), this protein is Chaperone protein DnaJ.